Reading from the N-terminus, the 567-residue chain is Proline--tRNA ligase (567 aa).

This sequence belongs to the class-II aminoacyl-tRNA synthetase family. ProS type 1 subfamily. Homodimer.

The protein resides in the cytoplasm. The catalysed reaction is tRNA(Pro) + L-proline + ATP = L-prolyl-tRNA(Pro) + AMP + diphosphate. Functionally, catalyzes the attachment of proline to tRNA(Pro) in a two-step reaction: proline is first activated by ATP to form Pro-AMP and then transferred to the acceptor end of tRNA(Pro). As ProRS can inadvertently accommodate and process non-cognate amino acids such as alanine and cysteine, to avoid such errors it has two additional distinct editing activities against alanine. One activity is designated as 'pretransfer' editing and involves the tRNA(Pro)-independent hydrolysis of activated Ala-AMP. The other activity is designated 'posttransfer' editing and involves deacylation of mischarged Ala-tRNA(Pro). The misacylated Cys-tRNA(Pro) is not edited by ProRS. In Stenotrophomonas maltophilia (strain K279a), this protein is Proline--tRNA ligase.